The primary structure comprises 123 residues: uncharacterized protein (123 aa).

The region spanning 17–117 (LNNNAFLVDV…NNQDKGWKQN (101 aa)) is the Rhodanese domain.

This is an uncharacterized protein from Rickettsia prowazekii (strain Madrid E).